A 258-amino-acid chain; its full sequence is MKKINLAISGCLGRMGQQLIKSSKNNKNFKLTALTENKAISKKIAGIKLDVNTEQTFKKTDVIIDFTVPNCTLDILKIASKLKKRVVIGTTGFNQKEEALIKKFSKTIPILKAGNMSLGVNLLMYLTEITSKSLNEEYLSKVFEVHHKHKKDYPSGTALMLGKGIADGKNKNLYNLMGKKFLNKKSFPYGKKINFNSIRKGEIIGEHEVTFSSGKEIIKLNHEAFDRALYSDGALTAAKWLINKKPGLYSMRDLLNFR.

Residue 10–15 participates in NAD(+) binding; that stretch reads GCLGRM. K38 contributes to the NADP(+) binding site. Residues 89–91 and 113–116 each bind NAD(+); these read GTT and AGNM. Catalysis depends on H146, which acts as the Proton donor/acceptor. H147 contacts (S)-2,3,4,5-tetrahydrodipicolinate. Catalysis depends on K150, which acts as the Proton donor. 156-157 is a binding site for (S)-2,3,4,5-tetrahydrodipicolinate; sequence GT.

It belongs to the DapB family.

Its subcellular location is the cytoplasm. It carries out the reaction (S)-2,3,4,5-tetrahydrodipicolinate + NAD(+) + H2O = (2S,4S)-4-hydroxy-2,3,4,5-tetrahydrodipicolinate + NADH + H(+). The enzyme catalyses (S)-2,3,4,5-tetrahydrodipicolinate + NADP(+) + H2O = (2S,4S)-4-hydroxy-2,3,4,5-tetrahydrodipicolinate + NADPH + H(+). The protein operates within amino-acid biosynthesis; L-lysine biosynthesis via DAP pathway; (S)-tetrahydrodipicolinate from L-aspartate: step 4/4. Functionally, catalyzes the conversion of 4-hydroxy-tetrahydrodipicolinate (HTPA) to tetrahydrodipicolinate. The polypeptide is 4-hydroxy-tetrahydrodipicolinate reductase (Pelagibacter ubique (strain HTCC1062)).